A 117-amino-acid chain; its full sequence is UPF0102 protein Clos_1471 (117 aa).

The protein belongs to the UPF0102 family.

The polypeptide is UPF0102 protein Clos_1471 (Alkaliphilus oremlandii (strain OhILAs) (Clostridium oremlandii (strain OhILAs))).